Reading from the N-terminus, the 288-residue chain is Formamidopyrimidine-DNA glycosylase (288 aa).

The Schiff-base intermediate with DNA role is filled by Pro2. Glu3 (proton donor) is an active-site residue. The active-site Proton donor; for beta-elimination activity is Lys59. Residues His93, Arg112, and Lys168 each coordinate DNA. The FPG-type zinc finger occupies 254–288 (NVYGRGGEPCKRCGAPIKRVVVGGRSTHYCATCQR). Arg278 acts as the Proton donor; for delta-elimination activity in catalysis.

This sequence belongs to the FPG family. In terms of assembly, monomer. Zn(2+) is required as a cofactor.

The catalysed reaction is Hydrolysis of DNA containing ring-opened 7-methylguanine residues, releasing 2,6-diamino-4-hydroxy-5-(N-methyl)formamidopyrimidine.. The enzyme catalyses 2'-deoxyribonucleotide-(2'-deoxyribose 5'-phosphate)-2'-deoxyribonucleotide-DNA = a 3'-end 2'-deoxyribonucleotide-(2,3-dehydro-2,3-deoxyribose 5'-phosphate)-DNA + a 5'-end 5'-phospho-2'-deoxyribonucleoside-DNA + H(+). Its function is as follows. Involved in base excision repair of DNA damaged by oxidation or by mutagenic agents. Acts as a DNA glycosylase that recognizes and removes damaged bases. Has a preference for oxidized purines, such as 7,8-dihydro-8-oxoguanine (8-oxoG). Has AP (apurinic/apyrimidinic) lyase activity and introduces nicks in the DNA strand. Cleaves the DNA backbone by beta-delta elimination to generate a single-strand break at the site of the removed base with both 3'- and 5'-phosphates. The polypeptide is Formamidopyrimidine-DNA glycosylase (Corynebacterium jeikeium (strain K411)).